Consider the following 298-residue polypeptide: Urease accessory protein UreD (298 aa).

The protein belongs to the UreD family. As to quaternary structure, ureD, UreF and UreG form a complex that acts as a GTP-hydrolysis-dependent molecular chaperone, activating the urease apoprotein by helping to assemble the nickel containing metallocenter of UreC. The UreE protein probably delivers the nickel.

The protein localises to the cytoplasm. Functionally, required for maturation of urease via the functional incorporation of the urease nickel metallocenter. The sequence is that of Urease accessory protein UreD from Marinobacter nauticus (strain ATCC 700491 / DSM 11845 / VT8) (Marinobacter aquaeolei).